A 510-amino-acid polypeptide reads, in one-letter code: L-2,4-diaminobutyrate decarboxylase (510 aa).

At K319 the chain carries N6-(pyridoxal phosphate)lysine.

This sequence belongs to the group II decarboxylase family. Requires pyridoxal 5'-phosphate as cofactor.

The enzyme catalyses L-2,4-diaminobutanoate + H(+) = propane-1,3-diamine + CO2. It participates in amine and polyamine biosynthesis; 1,3-diaminopropane biosynthesis; 1,3-diaminopropane from L-aspartate 4-semialdehyde: step 2/2. The protein is L-2,4-diaminobutyrate decarboxylase (ddc) of Acinetobacter baumannii.